We begin with the raw amino-acid sequence, 1007 residues long: Inversin-A (1007 aa).

ANK repeat units lie at residues 9–39 (SLASPVQAAAVTGDKTTLLKLIASSPEVIDQ), 43–72 (LGRTPLMYSVLGDRRSCAEALLKHGAQVNH), 76–105 (SGRTALHLAAQTGNHRLLKLLLSRKADCTH), 109–140 (RDITAVHLSTRHQDTRCLALILKYTPPGQVDA), 144–173 (RKQTALHWSAYYNRPRHVRLLVRHGSNIGI), 177–209 (EGKIPLHWAAGHKDPEAALTVRCLLEAAPTESL), 216–246 (EGRTPLHLAVGDGNQEVVRLLTSYRGCNVAP), 250–279 (LFRTPLHWAALLGYTPIAHLLLETNNSPNI), 284–313 (QGATPLHYAAQGNCPDTVRVLLSHISVRDE), 317–346 (EGRTAFMWAAGKGSDEVVRTMLELDPELEV), 352–381 (YGGTALHAASLSGQITTVRILLENRVQVDA), 385–414 (MKHTALFRACEMGHREVISTLIKGGAKVHL), 418–447 (DGRSPLHWAALGGNANVCQILIENNINPDA), 451–480 (EGRTPLQCAAYGGYIGCMEVLMENKADPNI), 484–513 (NGRTALHWSCNNGYLDAVKLLLGYSAFPNQ), and 519–549 (ERYTPLDYALLGGHQEVIQFMLEHGALSIAA). Positions 486–494 (RTALHWSCN) match the D-box 1 motif. The 30-residue stretch at 551–580 (QDIAASKIQAVYKGHKVRRAFQERKNLLMK) folds into the IQ 1 domain. Basic and acidic residues-rich tracts occupy residues 585–599 (RKGAAAKKREGENRQ) and 608–652 (GKQK…HQEE). 2 disordered regions span residues 585 to 837 (RKGA…KEFS) and 868 to 893 (SAKSGQRPLTETQSPEKACQGSSALK). Polar residues predominate over residues 684 to 701 (IQSSPIEHVHTNSIQTRM). Residues 702–712 (SPSRTSISHSS) are compositionally biased toward low complexity. Residues 727 to 745 (NPTQNNTQPRRTSRPQIES) show a composition bias toward polar residues. A compositionally biased stretch (basic and acidic residues) spans 751–771 (HRIEDLVQKESRRKSHREERK). The span at 772 to 784 (GSHRQRASSHHRL) shows a compositional bias: basic residues. Residues 870–893 (KSGQRPLTETQSPEKACQGSSALK) are compositionally biased toward polar residues. The D-box 2 motif lies at 964–972 (RKQLFQRKK). The region spanning 971–1000 (KKHAATVIQKAWRTYCIRKSSRKTRHSHLR) is the IQ 2 domain.

In terms of assembly, interacts with apc2. Binds calmodulin.

The protein localises to the cytoplasm. The protein resides in the cytoskeleton. Functionally, required for normal renal development and establishment of left-right axis. Probably acts as a molecular switch between different Wnt signaling pathways. Inhibits the canonical Wnt pathway by targeting cytoplasmic disheveled for degradation by the ubiquitin-proteasome. This suggests that it is required in renal development to oppose the repression of terminal differentiation of tubular epithelial cells by Wnt signaling. Plays a central role in convergent extension movements in gastrulating embryos, a processus regulated by Wnt signaling. This chain is Inversin-A (invs-a), found in Xenopus laevis (African clawed frog).